Reading from the N-terminus, the 205-residue chain is Macrophage immunometabolism regulator (205 aa).

Residues 1–40 form a disordered region; sequence MEVDINGVNRTNNSVPSTAEGSSPSKPDPEKPRCSSTPCS. Over residues 8–25 the composition is skewed to polar residues; it reads VNRTNNSVPSTAEGSSPS.

Belongs to the UNC119-binding protein family. As to quaternary structure, interacts with unc119 family proteins; interaction preferentially takes place when unc119 proteins are unliganded with myristoylated proteins.

It localises to the cytoplasm. The protein resides in the cell projection. The protein localises to the cilium. In terms of biological role, may play a role in immune regulation through regulation of the macrophage function. May also play a role in trafficking of proteins via its interaction with unc119 family cargo adapters. May play a role in ciliary membrane localization. This chain is Macrophage immunometabolism regulator (macir), found in Xenopus laevis (African clawed frog).